A 335-amino-acid chain; its full sequence is Anthranilate phosphoribosyltransferase (335 aa).

5-phospho-alpha-D-ribose 1-diphosphate-binding positions include Gly79, 82-83, Thr87, 89-92, 107-115, and Ser119; these read GD, NIST, and KHGSRSVSS. Residue Gly79 participates in anthranilate binding. A Mg(2+)-binding site is contributed by Ser91. Arg165 lines the anthranilate pocket. 2 residues coordinate Mg(2+): Asp223 and Glu224.

This sequence belongs to the anthranilate phosphoribosyltransferase family. In terms of assembly, homodimer. The cofactor is Mg(2+).

The catalysed reaction is N-(5-phospho-beta-D-ribosyl)anthranilate + diphosphate = 5-phospho-alpha-D-ribose 1-diphosphate + anthranilate. It functions in the pathway amino-acid biosynthesis; L-tryptophan biosynthesis; L-tryptophan from chorismate: step 2/5. In terms of biological role, catalyzes the transfer of the phosphoribosyl group of 5-phosphorylribose-1-pyrophosphate (PRPP) to anthranilate to yield N-(5'-phosphoribosyl)-anthranilate (PRA). The sequence is that of Anthranilate phosphoribosyltransferase from Helicobacter pylori (strain Shi470).